A 342-amino-acid chain; its full sequence is GTPase Obg (342 aa).

The Obg domain maps to 1-159; sequence MKFLDLCKVY…RTIWLRLKLI (159 aa). Positions 160–327 constitute an OBG-type G domain; sequence ADAGLLGLPN…VLRALWAEID (168 aa). GTP is bound by residues 166 to 173, 191 to 195, 212 to 215, 279 to 282, and 308 to 310; these read GLPNAGKS, FTTLV, DIPG, NKID, and SGV. The Mg(2+) site is built by Ser173 and Thr193.

It belongs to the TRAFAC class OBG-HflX-like GTPase superfamily. OBG GTPase family. As to quaternary structure, monomer. Requires Mg(2+) as cofactor.

The protein resides in the cytoplasm. Its function is as follows. An essential GTPase which binds GTP, GDP and possibly (p)ppGpp with moderate affinity, with high nucleotide exchange rates and a fairly low GTP hydrolysis rate. Plays a role in control of the cell cycle, stress response, ribosome biogenesis and in those bacteria that undergo differentiation, in morphogenesis control. The polypeptide is GTPase Obg (Cereibacter sphaeroides (strain ATCC 17025 / ATH 2.4.3) (Rhodobacter sphaeroides)).